Consider the following 188-residue polypeptide: Peroxidase B (188 aa).

This sequence belongs to the peroxidase family. In terms of processing, partially N-glycosylated.

It localises to the secreted. It catalyses the reaction 2 a phenolic donor + H2O2 = 2 a phenolic radical donor + 2 H2O. This is Peroxidase B from Aloe vera (Aloe).